A 525-amino-acid polypeptide reads, in one-letter code: Ribonuclease III domain-containing protein RNC1, chloroplastic (525 aa).

A chloroplast-targeting transit peptide spans methionine 1–arginine 28. RNase III domains are found at residues leucine 125–glycine 271 and glutamate 403–glycine 503.

In terms of assembly, interacts with RNA. Part of large ribonucleo-protein particles that contain CAF1 and/or CAF2.

It localises to the plastid. The protein localises to the chloroplast stroma. In terms of biological role, binds specific group II introns in chloroplasts and facilitates their splicing. Acts on both subgroup IIA and subgroup IIB introns. The substrates of the subgroup II also require the CRM domain proteins CAF1 or CAF2. Binds both single-stranded and double-stranded RNA non-specifically, but lacks endonuclease activity. Required for plastid ribosome biogenesis. The polypeptide is Ribonuclease III domain-containing protein RNC1, chloroplastic (Zea mays (Maize)).